A 381-amino-acid chain; its full sequence is Probable 26S proteasome regulatory subunit rpn9 (381 aa).

Residues 177–343 (QYYRHCLLYL…QIVTISSVQS (167 aa)) enclose the PCI domain.

It belongs to the proteasome subunit S11 family.

Acts as a regulatory subunit of the 26S proteasome which is involved in the ATP-dependent degradation of ubiquitinated proteins. The protein is Probable 26S proteasome regulatory subunit rpn9 (rpn9) of Schizosaccharomyces pombe (strain 972 / ATCC 24843) (Fission yeast).